The chain runs to 834 residues: Protein Jade-1 (834 aa).

Residues 1–46 are disordered; it reads MKRGRLPSSSEDSDDNGSLSTTWSQHSRSQHGRSSTCSRPEDRKPS. Residues 24 to 35 are compositionally biased toward low complexity; the sequence is SQHSRSQHGRSS. Residues 61 to 81 form an interaction with KAT7/HBO1 and histones region; that stretch reads DSYQLNPDDYYVLADPWRQEW. The tract at residues 81 to 189 is interaction with histones; that stretch reads WEKGVQVPVS…EQRCYDNMNH (109 aa). A Phosphoserine modification is found at S90. T93 carries the phosphothreonine modification. K115 participates in a covalent cross-link: Glycyl lysine isopeptide (Lys-Gly) (interchain with G-Cter in SUMO2). The PHD-type 1 zinc finger occupies 204–254; sequence DVVCDVCQSPDGEDGNEMVFCDKCNICVHQACYGILKVPEGSWLCRTCALG. The segment at 256–290 adopts a C2HC pre-PHD-type zinc-finger fold; it reads QPKCLLCPKKGGAMKPTRSGTKWVHVSCALWIPEV. The PHD-type 2 zinc-finger motif lies at 314–370; the sequence is LVCSLCNEKFGASIQCSVKNCRTAFHVTCAFDRGLEMKTILAENDEVKFKSYCPKHS. The disordered stretch occupies residues 367–409; that stretch reads PKHSSHRKPEEGLGEGAAQENGAPESSPQSPLEPYGSLEPNRE. Residue K573 forms a Glycyl lysine isopeptide (Lys-Gly) (interchain with G-Cter in SUMO2) linkage. 2 disordered regions span residues 589–621 and 676–716; these read HPLK…CGRR and DKSF…GTRK. A Phosphoserine modification is found at S603. At K609 the chain carries N6-acetyllysine. Phosphoserine occurs at positions 704 and 735. The interval 738–819 is disordered; it reads KSWGGFRIPK…EKKCIHASST (82 aa). 2 stretches are compositionally biased toward basic and acidic residues: residues 747–768 and 777–790; these read KKGE…HSDC and PAKE…RADS.

The protein belongs to the JADE family. Component of the HBO1 complex composed at least of ING4 or ING5, KAT7/HBO1, MEAF6, and one of JADE1, JADE2 and JADE3. Interacts with NPHP4. In terms of tissue distribution, highly expressed in kidney. Also present in liver (at protein level).

The protein resides in the nucleus. Its subcellular location is the chromosome. The protein localises to the cytoplasm. It localises to the cytoskeleton. It is found in the cilium basal body. In terms of biological role, scaffold subunit of some HBO1 complexes, which have a histone H4 acetyltransferase activity. Plays a key role in HBO1 complex by directing KAT7/HBO1 specificity towards histone H4 acetylation (H4K5ac, H4K8ac and H4K12ac), regulating DNA replication initiation, regulating DNA replication initiation. May also promote acetylation of nucleosomal histone H4 by KAT5. Promotes apoptosis. May act as a renal tumor suppressor. Negatively regulates canonical Wnt signaling; at least in part, cooperates with NPHP4 in this function. This Mus musculus (Mouse) protein is Protein Jade-1 (Jade1).